Here is a 258-residue protein sequence, read N- to C-terminus: Large ribosomal subunit protein bL19m (258 aa).

The tract at residues 235 to 258 (SKGLTGGVGGGGGKQKGQESKKKN) is disordered. Over residues 238–249 (LTGGVGGGGGKQ) the composition is skewed to gly residues.

Belongs to the bacterial ribosomal protein bL19 family. Component of the mitochondrial large ribosomal subunit (mt-LSU). Mature N.crassa 74S mitochondrial ribosomes consist of a small (37S) and a large (54S) subunit. The 37S small subunit contains a 16S ribosomal RNA (16S mt-rRNA) and 32 different proteins. The 54S large subunit contains a 23S rRNA (23S mt-rRNA) and 42 different proteins.

It localises to the mitochondrion. In terms of biological role, component of the mitochondrial ribosome (mitoribosome), a dedicated translation machinery responsible for the synthesis of mitochondrial genome-encoded proteins, including at least some of the essential transmembrane subunits of the mitochondrial respiratory chain. The mitoribosomes are attached to the mitochondrial inner membrane and translation products are cotranslationally integrated into the membrane. The sequence is that of Large ribosomal subunit protein bL19m (img1) from Neurospora crassa (strain ATCC 24698 / 74-OR23-1A / CBS 708.71 / DSM 1257 / FGSC 987).